We begin with the raw amino-acid sequence, 508 residues long: Lysine-specific permease LysP (508 aa).

Transmembrane regions (helical) follow at residues 43 to 63, 66 to 86, 112 to 132, 144 to 164, 184 to 204, 219 to 239, 270 to 290, 314 to 334, 367 to 387, 393 to 413, 436 to 456, and 467 to 487; these read SMIALGGTIGTGLFLTSGDVI, AGPFGALTAYVLIGAMVYFLM, PAFGFALGWNYWLNWAITVAV, WLPDVPSWIFSLIALIIVFSI, ITVVVLFLIIGFLSIFGIMGG, FVGGLGSFTTGGGILGVLLVA, IFWRILVFYILSIFVMAAIIP, VGFSIAASIMNAVVLTSVVSA, IPFIALLATTAVALLTFLTSI, FTLLVSASGLTGFIAWIGIAI, AKLFPFGPILALIMTVLVTLG, and WVQGVVMYAAIPLFFILYLGY.

Belongs to the amino acid-polyamine-organocation (APC) superfamily. Amino acid transporter (AAT) (TC 2.A.3.1) family.

The protein localises to the cell membrane. It carries out the reaction L-lysine(out) + H(+)(out) = L-lysine(in) + H(+)(in). In terms of biological role, permease involved in lysine uptake. The chain is Lysine-specific permease LysP from Lactococcus lactis subsp. cremoris (strain MG1363).